Reading from the N-terminus, the 363-residue chain is D-xylulose reductase (363 aa).

Zn(2+)-binding residues include C41, H66, and E159. G183–G188 is an NAD(+) binding site.

Belongs to the zinc-containing alcohol dehydrogenase family. It depends on Zn(2+) as a cofactor.

It catalyses the reaction xylitol + NAD(+) = D-xylulose + NADH + H(+). It participates in carbohydrate degradation; L-arabinose degradation via L-arabinitol; D-xylulose 5-phosphate from L-arabinose (fungal route): step 4/5. The protein is D-xylulose reductase (XYL2) of Scheffersomyces stipitis (strain ATCC 58785 / CBS 6054 / NBRC 10063 / NRRL Y-11545) (Yeast).